The primary structure comprises 121 residues: Large ribosomal subunit protein bL20 (121 aa).

The protein belongs to the bacterial ribosomal protein bL20 family.

Binds directly to 23S ribosomal RNA and is necessary for the in vitro assembly process of the 50S ribosomal subunit. It is not involved in the protein synthesizing functions of that subunit. The polypeptide is Large ribosomal subunit protein bL20 (Moorella thermoacetica (strain ATCC 39073 / JCM 9320)).